Here is a 517-residue protein sequence, read N- to C-terminus: Protein disulfide-isomerase EUG1 (517 aa).

An N-terminal signal peptide occupies residues 1 to 29 (MQVTTRFISAIVSFCLFASFTLAENSARA). One can recognise a Thioredoxin 1 domain in the interval 30-141 (TPGSDLLVLT…ITQYMIQLYE (112 aa)). N-linked (GlcNAc...) asparagine glycans are attached at residues Asn-159, Asn-174, Asn-207, Asn-293, and Asn-462. Residues 355–487 (YREGTAKPIV…VFEFIKESGT (133 aa)) enclose the Thioredoxin 2 domain. The Prevents secretion from ER signature appears at 514–517 (HDEL).

It belongs to the protein disulfide isomerase family. In terms of assembly, interacts with EPS1. Post-translationally, may have O-linked mannose residues.

The protein localises to the endoplasmic reticulum lumen. It carries out the reaction Catalyzes the rearrangement of -S-S- bonds in proteins.. In terms of biological role, probably interacts with nascent polypeptides in the endoplasmic reticulum. It is an essential gene only in the absence of PDI. Its native disulfide isomerase activity is very low. The polypeptide is Protein disulfide-isomerase EUG1 (EUG1) (Saccharomyces cerevisiae (strain ATCC 204508 / S288c) (Baker's yeast)).